Here is a 349-residue protein sequence, read N- to C-terminus: Anthranilate phosphoribosyltransferase (349 aa).

Residues Gly-82, 85–86 (GD), 92–95 (NVST), 110–118 (KHGNRGVSS), and Ser-122 each bind 5-phospho-alpha-D-ribose 1-diphosphate. Position 82 (Gly-82) interacts with anthranilate. Ser-94 serves as a coordination point for Mg(2+). Asn-113 contacts anthranilate. Anthranilate is bound at residue Arg-168. Mg(2+) contacts are provided by Asp-227 and Glu-228.

The protein belongs to the anthranilate phosphoribosyltransferase family. Homodimer. Requires Mg(2+) as cofactor.

It carries out the reaction N-(5-phospho-beta-D-ribosyl)anthranilate + diphosphate = 5-phospho-alpha-D-ribose 1-diphosphate + anthranilate. It participates in amino-acid biosynthesis; L-tryptophan biosynthesis; L-tryptophan from chorismate: step 2/5. In terms of biological role, catalyzes the transfer of the phosphoribosyl group of 5-phosphorylribose-1-pyrophosphate (PRPP) to anthranilate to yield N-(5'-phosphoribosyl)-anthranilate (PRA). The protein is Anthranilate phosphoribosyltransferase of Acinetobacter baumannii (strain SDF).